A 155-amino-acid polypeptide reads, in one-letter code: SsrA-binding protein (155 aa).

Belongs to the SmpB family.

It is found in the cytoplasm. In terms of biological role, required for rescue of stalled ribosomes mediated by trans-translation. Binds to transfer-messenger RNA (tmRNA), required for stable association of tmRNA with ribosomes. tmRNA and SmpB together mimic tRNA shape, replacing the anticodon stem-loop with SmpB. tmRNA is encoded by the ssrA gene; the 2 termini fold to resemble tRNA(Ala) and it encodes a 'tag peptide', a short internal open reading frame. During trans-translation Ala-aminoacylated tmRNA acts like a tRNA, entering the A-site of stalled ribosomes, displacing the stalled mRNA. The ribosome then switches to translate the ORF on the tmRNA; the nascent peptide is terminated with the 'tag peptide' encoded by the tmRNA and targeted for degradation. The ribosome is freed to recommence translation, which seems to be the essential function of trans-translation. This is SsrA-binding protein from Halothermothrix orenii (strain H 168 / OCM 544 / DSM 9562).